A 173-amino-acid polypeptide reads, in one-letter code: uncharacterized protein (173 aa).

This is an uncharacterized protein from Haemophilus influenzae (strain ATCC 51907 / DSM 11121 / KW20 / Rd).